Reading from the N-terminus, the 841-residue chain is Translation initiation factor IF-2 (841 aa).

The interval 87–254 (RKKKVFVQRS…KRNAHGFQSP (168 aa)) is disordered. Residues 96–135 (SPEEIEAERKREMDERRAVENAARQKAEEEAKRRAEEDAR) are compositionally biased toward basic and acidic residues. A compositionally biased stretch (low complexity) spans 136 to 175 (SQPAASQSAPAAAEPVAAAEPVREAAPAAAPAPASAAPSA). 2 stretches are compositionally biased toward basic and acidic residues: residues 176–217 (DARK…EKAP) and 225–234 (TTDEESDSFR). The span at 235 to 248 (RGGRGKGKLKKRNA) shows a compositional bias: basic residues. The tr-type G domain maps to 341-510 (SRAPVVTVMG…LLQAEVLELK (170 aa)). Positions 350–357 (GHVDHGKT) are G1. 350–357 (GHVDHGKT) is a binding site for GTP. The G2 stretch occupies residues 375–379 (GITQH). Positions 396-399 (DTPG) are G3. Residues 396-400 (DTPGH) and 450-453 (NKID) contribute to the GTP site. Residues 450-453 (NKID) form a G4 region. The G5 stretch occupies residues 486–488 (SAK).

This sequence belongs to the TRAFAC class translation factor GTPase superfamily. Classic translation factor GTPase family. IF-2 subfamily.

Its subcellular location is the cytoplasm. Its function is as follows. One of the essential components for the initiation of protein synthesis. Protects formylmethionyl-tRNA from spontaneous hydrolysis and promotes its binding to the 30S ribosomal subunits. Also involved in the hydrolysis of GTP during the formation of the 70S ribosomal complex. This is Translation initiation factor IF-2 from Pseudomonas syringae pv. syringae (strain B728a).